The following is a 454-amino-acid chain: UDP-N-acetylmuramoylalanine--D-glutamate ligase (454 aa).

116–122 (GTNGKTS) is an ATP binding site.

It belongs to the MurCDEF family.

It localises to the cytoplasm. It carries out the reaction UDP-N-acetyl-alpha-D-muramoyl-L-alanine + D-glutamate + ATP = UDP-N-acetyl-alpha-D-muramoyl-L-alanyl-D-glutamate + ADP + phosphate + H(+). Its pathway is cell wall biogenesis; peptidoglycan biosynthesis. Its function is as follows. Cell wall formation. Catalyzes the addition of glutamate to the nucleotide precursor UDP-N-acetylmuramoyl-L-alanine (UMA). This chain is UDP-N-acetylmuramoylalanine--D-glutamate ligase, found in Lachnoclostridium phytofermentans (strain ATCC 700394 / DSM 18823 / ISDg) (Clostridium phytofermentans).